Here is a 116-residue protein sequence, read N- to C-terminus: Methionine-R-sulfoxide reductase B1 (116 aa).

Residues 1–106 (MSFCSFFGGE…FSSSLKFIPK (106 aa)) form the MsrB domain. Zn(2+)-binding residues include cysteine 23, cysteine 26, cysteine 71, and cysteine 74. Selenocysteine 95 (nucleophile) is an active-site residue. Selenocysteine 95 is a non-standard amino acid (selenocysteine).

It belongs to the MsrB Met sulfoxide reductase family. Zn(2+) serves as cofactor. In terms of processing, truncated MSRB1/SEPX1 proteins produced by failed UGA/Sec decoding are ubiquitinated by the CRL2(FEM1C) E3 ubiquitin-protein ligase complex.

The protein localises to the cytoplasm. Its subcellular location is the nucleus. The protein resides in the cytoskeleton. It catalyses the reaction L-methionyl-[protein] + [thioredoxin]-disulfide + H2O = L-methionyl-(R)-S-oxide-[protein] + [thioredoxin]-dithiol. The catalysed reaction is [thioredoxin]-disulfide + L-methionine + H2O = L-methionine (R)-S-oxide + [thioredoxin]-dithiol. In terms of biological role, methionine-sulfoxide reductase that specifically reduces methionine (R)-sulfoxide back to methionine. While in many cases, methionine oxidation is the result of random oxidation following oxidative stress, methionine oxidation is also a post-translational modification that takes place on specific residue. Acts as a regulator of actin assembly by reducing methionine (R)-sulfoxide mediated by MICALs (MICAL1, MICAL2 or MICAL3) on actin, thereby promoting filament repolymerization. Plays a role in innate immunity by reducing oxidized actin, leading to actin repolymerization in macrophages. The polypeptide is Methionine-R-sulfoxide reductase B1 (MSRB1) (Bos taurus (Bovine)).